We begin with the raw amino-acid sequence, 732 residues long: Catalase-peroxidase (732 aa).

The tract at residues 1–23 (MSEQSKCPVTGRTAGHPVAGGGM) is disordered. The segment at residues 97-220 (WHSAGTYRTS…LAAVQMGLIY (124 aa)) is a cross-link (tryptophyl-tyrosyl-methioninium (Trp-Tyr) (with M-246)). His98 (proton acceptor) is an active-site residue. The tryptophyl-tyrosyl-methioninium (Tyr-Met) (with W-97) cross-link spans 220-246 (YVNPEGPDGNPDPVAAGRDIRETFARM). His261 is a heme b binding site.

Belongs to the peroxidase family. Peroxidase/catalase subfamily. Homodimer or homotetramer. Heme b serves as cofactor. Formation of the three residue Trp-Tyr-Met cross-link is important for the catalase, but not the peroxidase activity of the enzyme.

It catalyses the reaction H2O2 + AH2 = A + 2 H2O. It carries out the reaction 2 H2O2 = O2 + 2 H2O. Functionally, bifunctional enzyme with both catalase and broad-spectrum peroxidase activity. The polypeptide is Catalase-peroxidase (Chlorobium limicola (strain DSM 245 / NBRC 103803 / 6330)).